Reading from the N-terminus, the 110-residue chain is uncharacterized protein (110 aa).

Positions 1 to 20 (MNQQNQKISNPQTPVPTTSE) are enriched in polar residues. A disordered region spans residues 1 to 24 (MNQQNQKISNPQTPVPTTSEMNDR).

This is an uncharacterized protein from Bacillus subtilis (strain 168).